The sequence spans 55 residues: uncharacterized protein (55 aa).

The signal sequence occupies residues 1–25 (MKFVKAIWPFVAVAIVFMFMSAFKF).

This is an uncharacterized protein from Bacillus subtilis (strain 168).